The chain runs to 535 residues: NAD(P)H-quinone oxidoreductase chain 4 2 (535 aa).

Helical transmembrane passes span 9 to 29 (FPWL…IPLI), 51 to 71 (WFAL…FYVG), 106 to 126 (LILL…PVTL), 130 to 150 (LFYF…AVQD), 152 to 172 (LLFF…LSIW), 184 to 204 (FILY…AMAF), 227 to 247 (LLLY…FPLH), 258 to 278 (TAPV…YALM), 290 to 310 (LYFA…AALT), 326 to 346 (ISHM…GMSG), 347 to 367 (AMLQ…LVGA), 399 to 419 (LASL…VFIG), 432 to 452 (LVVV…LLSM), and 479 to 499 (VFII…PKLV).

The protein belongs to the complex I subunit 4 family.

It localises to the cellular thylakoid membrane. The catalysed reaction is a plastoquinone + NADH + (n+1) H(+)(in) = a plastoquinol + NAD(+) + n H(+)(out). The enzyme catalyses a plastoquinone + NADPH + (n+1) H(+)(in) = a plastoquinol + NADP(+) + n H(+)(out). NDH-1 shuttles electrons from NAD(P)H, via FMN and iron-sulfur (Fe-S) centers, to quinones in the respiratory chain. The immediate electron acceptor for the enzyme in this species is believed to be plastoquinone. Couples the redox reaction to proton translocation (for every two electrons transferred, four hydrogen ions are translocated across the cytoplasmic membrane), and thus conserves the redox energy in a proton gradient. The sequence is that of NAD(P)H-quinone oxidoreductase chain 4 2 from Synechococcus sp. (strain JA-3-3Ab) (Cyanobacteria bacterium Yellowstone A-Prime).